Reading from the N-terminus, the 333-residue chain is Adenosine deaminase (333 aa).

Zn(2+) is bound by residues His-12 and His-14. Residues His-14, Asp-16, and Gly-170 each coordinate substrate. His-197 provides a ligand contact to Zn(2+). Catalysis depends on Glu-200, which acts as the Proton donor. Asp-278 serves as a coordination point for Zn(2+). Asp-279 lines the substrate pocket.

The protein belongs to the metallo-dependent hydrolases superfamily. Adenosine and AMP deaminases family. Adenosine deaminase subfamily. Zn(2+) serves as cofactor.

It carries out the reaction adenosine + H2O + H(+) = inosine + NH4(+). It catalyses the reaction 2'-deoxyadenosine + H2O + H(+) = 2'-deoxyinosine + NH4(+). In terms of biological role, catalyzes the hydrolytic deamination of adenosine and 2-deoxyadenosine. In Klebsiella pneumoniae (strain 342), this protein is Adenosine deaminase.